A 216-amino-acid chain; its full sequence is Ribose-5-phosphate isomerase A (216 aa).

Residues 26–29 (TGST), 79–82 (DGAD), and 92–95 (KGGG) each bind substrate. Glu-101 serves as the catalytic Proton acceptor. Position 119 (Lys-119) interacts with substrate.

It belongs to the ribose 5-phosphate isomerase family. As to quaternary structure, homodimer.

The catalysed reaction is aldehydo-D-ribose 5-phosphate = D-ribulose 5-phosphate. It functions in the pathway carbohydrate degradation; pentose phosphate pathway; D-ribose 5-phosphate from D-ribulose 5-phosphate (non-oxidative stage): step 1/1. Catalyzes the reversible conversion of ribose-5-phosphate to ribulose 5-phosphate. The sequence is that of Ribose-5-phosphate isomerase A from Legionella pneumophila (strain Lens).